A 412-amino-acid chain; its full sequence is Putative pectate lyase 11 (412 aa).

Residues 1–24 (MVSYSNNHFAYAFLLLLTIGNTLA) form the signal peptide. Residues aspartate 210, aspartate 234, and aspartate 238 each contribute to the Ca(2+) site. The active site involves arginine 290.

The protein belongs to the polysaccharide lyase 1 family. It depends on Ca(2+) as a cofactor.

The enzyme catalyses Eliminative cleavage of (1-&gt;4)-alpha-D-galacturonan to give oligosaccharides with 4-deoxy-alpha-D-galact-4-enuronosyl groups at their non-reducing ends.. It participates in glycan metabolism; pectin degradation; 2-dehydro-3-deoxy-D-gluconate from pectin: step 2/5. The polypeptide is Putative pectate lyase 11 (Arabidopsis thaliana (Mouse-ear cress)).